A 607-amino-acid polypeptide reads, in one-letter code: Cyclic-di-GMP receptor FimW (607 aa).

Residues 323–492 (ERTFQRTQGQ…GGTQMGIEMI (170 aa)) are pilZ-like domain. The RXXXR motif signature appears at 324-328 (RTFQR). The D/NXSXXG motif motif lies at 435–440 (NHSPGG). The span at 568–582 (SQFEYRSAEPVNTPS) shows a compositional bias: polar residues. The tract at residues 568–607 (SQFEYRSAEPVNTPSDKPVTAPVARPPAGEEDFDSLWKSL) is disordered.

In terms of assembly, monomer in the absence of c-di-GMP. Forms dimers in the presence of c-di-GMP.

Its subcellular location is the cytoplasm. In terms of biological role, high-affinity cyclic-di-GMP binding protein that regulates type IV pili (T4P) elongation. Required for T4P-mediated surface attachment and walking motility during the early phases of surface colonization. Not required for twitching motility. Does not bind related nucleotides such as GMP, GDP, GTP or ATP. The polypeptide is Cyclic-di-GMP receptor FimW (Pseudomonas aeruginosa (strain ATCC 15692 / DSM 22644 / CIP 104116 / JCM 14847 / LMG 12228 / 1C / PRS 101 / PAO1)).